The chain runs to 342 residues: Ferredoxin--NADP reductase (342 aa).

FAD-binding residues include cysteine 17, aspartate 36, glutamine 44, tyrosine 49, isoleucine 89, phenylalanine 124, aspartate 289, and threonine 330.

The protein belongs to the ferredoxin--NADP reductase type 2 family. In terms of assembly, homodimer. The cofactor is FAD.

It catalyses the reaction 2 reduced [2Fe-2S]-[ferredoxin] + NADP(+) + H(+) = 2 oxidized [2Fe-2S]-[ferredoxin] + NADPH. The chain is Ferredoxin--NADP reductase from Rhodopseudomonas palustris (strain BisB18).